Reading from the N-terminus, the 20-residue chain is Protein PR-L6 (20 aa).

Belongs to the BetVI family.

In Lupinus luteus (European yellow lupine), this protein is Protein PR-L6.